Reading from the N-terminus, the 59-residue chain is Putative HTH-type transcriptional regulator YneL (59 aa).

Positions 1-59 (MSPLRYQKWLRLNEVRRQMLNEHYDVTTAAYAVGYESYPISVGNIRGCLESHPREILPG) constitute an HTH araC/xylS-type domain. The H-T-H motif DNA-binding region spans 26-49 (VTTAAYAVGYESYPISVGNIRGCL).

This chain is Putative HTH-type transcriptional regulator YneL (yneL), found in Escherichia coli (strain K12).